The chain runs to 140 residues: MTIQYTFSMIKPDAIKRNKIGQVNTYLENEGLKIVAQKMTTLTKYEAECFYDEHRARPFFDSLVEYITSGPVVLQVLKGMDAITLNRKVMGATNPAEAEAGTIRKDIGESIEANSIHGSDSENSAKREIKFFFKKSEIIE.

The ATP site is built by K11, F59, R87, T93, R104, and N114. The active-site Pros-phosphohistidine intermediate is H117.

This sequence belongs to the NDK family. As to quaternary structure, homotetramer. The cofactor is Mg(2+).

The protein localises to the cytoplasm. It carries out the reaction a 2'-deoxyribonucleoside 5'-diphosphate + ATP = a 2'-deoxyribonucleoside 5'-triphosphate + ADP. The catalysed reaction is a ribonucleoside 5'-diphosphate + ATP = a ribonucleoside 5'-triphosphate + ADP. Major role in the synthesis of nucleoside triphosphates other than ATP. The ATP gamma phosphate is transferred to the NDP beta phosphate via a ping-pong mechanism, using a phosphorylated active-site intermediate. In Rickettsia bellii (strain OSU 85-389), this protein is Nucleoside diphosphate kinase.